The following is a 262-amino-acid chain: 3-methyl-2-oxobutanoate hydroxymethyltransferase (262 aa).

Mg(2+) is bound by residues Asp-44 and Asp-83. Residues 44-45, Asp-83, and Lys-112 each bind 3-methyl-2-oxobutanoate; that span reads DS. Glu-114 is a Mg(2+) binding site. Glu-181 acts as the Proton acceptor in catalysis.

The protein belongs to the PanB family. In terms of assembly, homodecamer; pentamer of dimers. The cofactor is Mg(2+).

Its subcellular location is the cytoplasm. The catalysed reaction is 3-methyl-2-oxobutanoate + (6R)-5,10-methylene-5,6,7,8-tetrahydrofolate + H2O = 2-dehydropantoate + (6S)-5,6,7,8-tetrahydrofolate. It participates in cofactor biosynthesis; (R)-pantothenate biosynthesis; (R)-pantoate from 3-methyl-2-oxobutanoate: step 1/2. Functionally, catalyzes the reversible reaction in which hydroxymethyl group from 5,10-methylenetetrahydrofolate is transferred onto alpha-ketoisovalerate to form ketopantoate. The protein is 3-methyl-2-oxobutanoate hydroxymethyltransferase of Thiobacillus denitrificans (strain ATCC 25259 / T1).